The sequence spans 103 residues: Large ribosomal subunit protein bL21 (103 aa).

This sequence belongs to the bacterial ribosomal protein bL21 family. Part of the 50S ribosomal subunit. Contacts protein L20.

This protein binds to 23S rRNA in the presence of protein L20. The protein is Large ribosomal subunit protein bL21 of Shewanella pealeana (strain ATCC 700345 / ANG-SQ1).